We begin with the raw amino-acid sequence, 176 residues long: Protein MAL2 (176 aa).

Residues 1–34 (MSAGGASVPPPPNPAVSFPVPRVTLPAGPDILRT) are Cytoplasmic-facing. In terms of domain architecture, MARVEL spans 31–175 (ILRTYSGAFV…SLGLALRRWR (145 aa)). A helical membrane pass occupies residues 35–55 (YSGAFVCLEILFGGLVWILVA). Topologically, residues 56–66 (SSNVPLPLLQG) are lumenal. Residues 67–87 (WVMFVSVTAFFFSLLFLGLFL) form a helical membrane-spanning segment. Topologically, residues 88–102 (SGMVTQIDANWNFLD) are cytoplasmic. The chain crosses the membrane as a helical span at residues 103–123 (FAYHFTVFVFYFGAFLLEAAA). Residues 124–149 (TSLHDLHYNITMTGQPLLNDNQYNIN) lie on the Lumenal side of the membrane. Asn132 is a glycosylation site (N-linked (GlcNAc...) asparagine). Residues 150 to 170 (VAASIFAFMTTACYGCSLGLA) traverse the membrane as a helical segment. The Cytoplasmic segment spans residues 171-176 (LRRWRP).

Belongs to the MAL family. In terms of assembly, interacts with TPD52L2.

It is found in the cell membrane. The protein resides in the apical cell membrane. Member of the machinery of polarized transport. Required for the indirect transcytotic route at the step of the egress of the transcytosing cargo from perinuclear endosomes in order for it to travel to the apical surface via a raft-dependent pathway. The sequence is that of Protein MAL2 (MAL2) from Pongo abelii (Sumatran orangutan).